We begin with the raw amino-acid sequence, 227 residues long: PKHD-type hydroxylase Bphy_5374 (227 aa).

Positions 79–179 (KVYPPLFNRY…RVASFFWVQS (101 aa)) constitute a Fe2OG dioxygenase domain. Fe cation contacts are provided by H97, D99, and H160. R170 lines the 2-oxoglutarate pocket.

Fe(2+) is required as a cofactor. L-ascorbate serves as cofactor.

This chain is PKHD-type hydroxylase Bphy_5374, found in Paraburkholderia phymatum (strain DSM 17167 / CIP 108236 / LMG 21445 / STM815) (Burkholderia phymatum).